The following is a 134-amino-acid chain: Large ribosomal subunit protein bL20 (134 aa).

Belongs to the bacterial ribosomal protein bL20 family.

Binds directly to 23S ribosomal RNA and is necessary for the in vitro assembly process of the 50S ribosomal subunit. It is not involved in the protein synthesizing functions of that subunit. In Brucella anthropi (strain ATCC 49188 / DSM 6882 / CCUG 24695 / JCM 21032 / LMG 3331 / NBRC 15819 / NCTC 12168 / Alc 37) (Ochrobactrum anthropi), this protein is Large ribosomal subunit protein bL20.